We begin with the raw amino-acid sequence, 793 residues long: Short transient receptor potential channel 1 (793 aa).

A disordered region spans residues Met-1 to Glu-30. The Cytoplasmic portion of the chain corresponds to Met-1 to Lys-345. Residues Ser-15–Pro-28 are compositionally biased toward low complexity. ANK repeat units follow at residues Leu-46–Leu-75, Leu-83–Gln-109, Ala-111–Thr-156, and Met-158–Lys-180. Zn(2+)-binding residues include His-189, Cys-193, Cys-195, and Cys-198. Positions Pro-346–Ile-379 form an intramembrane region, discontinuously helical. The Cytoplasmic portion of the chain corresponds to Ile-380–Lys-386. Residues Phe-387–Tyr-404 form a helical membrane-spanning segment. Over Ser-405–Arg-422 the chain is Extracellular. A helical membrane pass occupies residues Ile-423–Ile-439. Residues Lys-440–Arg-455 lie on the Cytoplasmic side of the membrane. A helical transmembrane segment spans residues Asn-456–Val-475. Over Ala-476–Leu-496 the chain is Extracellular. A helical transmembrane segment spans residues Val-497 to Tyr-517. Residues Thr-518–Asp-536 are Cytoplasmic-facing. The helical transmembrane segment at Phe-537–Leu-558 threads the bilayer. The Extracellular segment spans residues Tyr-559–Ala-623. Cys-571 and Cys-576 are joined by a disulfide. The helical transmembrane segment at Val-624–Met-644 threads the bilayer. Over Leu-645–Asn-793 the chain is Cytoplasmic.

Belongs to the transient receptor (TC 1.A.4) family. STrpC subfamily. TRPC1 sub-subfamily. In terms of assembly, heterotetramer with TRPC4 and/or TRPC5. Forms a heteromeric ion channel with TRPC4, with a 1:3 TRPC1:TRPC4 stoichiometry. Unlike other TRP channel proteins, does not form a homomeric channel. Interacts with TRPC4AP. Interacts with ITPR3. Interacts with MX1 and RNF24. Interacts with FKBP4. Interacts with PLSCR1. Interacts with PKD2L2. Forms a heterotetramer with PKD2 with a 2:2 stoichiometry; has distinct channel properties separate from PKD2 or TRPC1 homomers alone. As to quaternary structure, interacts with isoform 2 of TRPC3. Activation of PRKCA induces phosphorylation of TRPC1 and subsequent Ca2+ entry into cells. As to expression, seems to be ubiquitous.

The protein localises to the cell membrane. The enzyme catalyses Ca(2+)(in) = Ca(2+)(out). The catalysed reaction is Na(+)(in) = Na(+)(out). It carries out the reaction Li(+)(in) = Li(+)(out). It catalyses the reaction Cs(+)(in) = Cs(+)(out). Its activity is regulated as follows. May be operated by a phosphatidylinositol second messenger system activated by receptor tyrosine kinases or G-protein coupled receptors. Also activated by intracellular calcium store depletion. Inhibited by xanthine-based inhibitor Pico145. In terms of biological role, forms a receptor-activated non-selective calcium permeant cation channel. Forms a heteromeric ion channel with TRPC4 or TRPC5 that has reduced calcium permeability compared to the homomeric TRPC4 or TRPC5 channel. Also permeable to monovalent ions including sodium, lithium and cesium ions. Its function is as follows. Forms a receptor-activated non-selective calcium permeant cation channel. Also activated by intracellular calcium store depletion. This is Short transient receptor potential channel 1 (TRPC1) from Homo sapiens (Human).